The sequence spans 79 residues: MKLFLVSIVLVGMLVLAAARPERDIDSFDEQEEKGFVKRGASCDCHPFVGTYWFGISNCPSGHGYRKKCASFFGVCCVK.

Residues 1-19 form the signal peptide; that stretch reads MKLFLVSIVLVGMLVLAAA. The propeptide occupies 20–39; sequence RPERDIDSFDEQEEKGFVKR. 3 cysteine pairs are disulfide-bonded: C43–C76, C45–C69, and C59–C77.

Belongs to the sea anemone type 3 (BDS) potassium channel toxin family. As to expression, highly expressed by the mesenteries. Moderately expressed by the pharynx. Weakly expressed by the gonad and pedal disk. No expression in tentacle.

It localises to the secreted. Its subcellular location is the nematocyst. In terms of biological role, peptide with both antimicrobial and neurotoxin activities. Cationic AMP with antibacterial activity against both Gram-positive bacteria (B.subtilis, MIC=11.49 ug/mL) and Gram-negative bacteria (E.coli (MIC=12.21 ug/mL) and S.enterica (MIC=11.95 ug/mL)). Shows no significant antimicrobial activity against bacteria S.aureus and P.aeruginosa, as well as the fungus C.albicans. In vivo, induces reversible paralytic activity towards the shrimp P.paucidens. May act by impairing sodium or potassium channels in the prey. This Urticina crassicornis (Mottled anemone) protein is Crassicorin-I.